Here is a 769-residue protein sequence, read N- to C-terminus: Intron Large complex component GCFC2 (769 aa).

Disordered stretches follow at residues Met-1–Glu-122 and Arg-134–Gln-212. 4 positions are modified to phosphoserine: Ser-16, Ser-17, Ser-19, and Ser-85. Thr-86 carries the phosphothreonine modification. Residues Ser-118 and Ser-169 each carry the phosphoserine modification. Positions Arg-190–Glu-201 are enriched in basic and acidic residues. The segment covering Ser-202–Gln-212 has biased composition (acidic residues). 2 positions are modified to phosphoserine: Ser-203 and Ser-206. Residues Asn-256–Asn-308 adopt a coiled-coil conformation.

This sequence belongs to the GCF family. As to quaternary structure, found in the Intron Large (IL) complex, a post-mRNA release spliceosomal complex containing the excised intron, U2, U5 and U6 snRNPs, and splicing factors. Interacts with TFIP11 and DHX15.

The protein resides in the nucleus. The protein localises to the nucleoplasm. It localises to the nucleolus. Its function is as follows. Involved in pre-mRNA splicing through regulating spliceosome C complex formation. May play a role during late-stage splicing events and turnover of excised introns. The protein is Intron Large complex component GCFC2 (Gcfc2) of Mus musculus (Mouse).